The sequence spans 372 residues: MAFKSLLSFVSVIGALQGANAALTRRVACPDGVNTATNAACCQLFAVREDLQQNLFHGGLCTAEAHESLRLTFHDAIAISPALEAQGIFGGGGADGSIAIFPEIETNFHPNIGLDEIIELQKPFIARHNISVADFIQFAGAIGASNCAGAPQLAAFVGRKDATQPAPDGLVPEPFHTPDQIFDRLADASQGEFDPILTVWLLTAHTVAAANDVDPTKSGLPFDSTPELWDTQFFLETQLRGTSFPGSGGNQGEVESPLAGEMRLQSDHTIARDSRTACEWQSFVDNQPKAQQMFQFVFHDLSIFGQDINTLVDCTEVVPIPADPQGHTHFPAGLSNADIEQACAETPFPTFPTDPGPKTAVAPVPKPPAARK.

The first 26 residues, 1-26, serve as a signal peptide directing secretion; that stretch reads MAFKSLLSFVSVIGALQGANAALTRR. Residue histidine 74 is the Proton acceptor of the active site. Aspartate 75, glycine 93, aspartate 95, and serine 97 together coordinate Ca(2+). N-linked (GlcNAc...) asparagine glycosylation is present at asparagine 129. Position 205 (histidine 205) interacts with heme b. Residues threonine 206, aspartate 223, threonine 225, leucine 228, and aspartate 230 each coordinate Ca(2+). The disordered stretch occupies residues 346–372; sequence TPFPTFPTDPGPKTAVAPVPKPPAARK.

It belongs to the peroxidase family. Ligninase subfamily. It depends on Ca(2+) as a cofactor. Heme b serves as cofactor.

The enzyme catalyses 1-(3,4-dimethoxyphenyl)-2-(2-methoxyphenoxy)propane-1,3-diol + H2O2 = 3,4-dimethoxybenzaldehyde + guaiacol + glycolaldehyde + H2O. The catalysed reaction is 2 (3,4-dimethoxyphenyl)methanol + H2O2 = 2 (3,4-dimethoxyphenyl)methanol radical + 2 H2O. Its pathway is secondary metabolite metabolism; lignin degradation. Depolymerization of lignin. Catalyzes the C(alpha)-C(beta) cleavage of the propyl side chains of lignin. This chain is Ligninase C, found in Trametes versicolor (White-rot fungus).